The following is a 462-amino-acid chain: uncharacterized protein (462 aa).

Transmembrane regions (helical) follow at residues 12–32 (WWWL…APTV) and 257–277 (GLCV…LELV).

Belongs to the HHV-5 US29 protein family.

It localises to the host membrane. This is an uncharacterized protein from Homo sapiens (Human).